Reading from the N-terminus, the 632-residue chain is Putative acetyl-CoA decarbonylase/synthase complex subunit alpha-like (632 aa).

[Ni-4Fe-4S] cluster is bound by residues H200, H226, C263, C379, C408, and C438.

It belongs to the Ni-containing carbon monoxide dehydrogenase family.

Its function is as follows. Part of the ACDS complex that catalyzes the reversible cleavage of acetyl-CoA, allowing autotrophic growth from CO(2). The alpha-epsilon subcomponent functions as a carbon monoxide dehydrogenase. This Methanopyrus kandleri (strain AV19 / DSM 6324 / JCM 9639 / NBRC 100938) protein is Putative acetyl-CoA decarbonylase/synthase complex subunit alpha-like (cdhA2).